Consider the following 421-residue polypeptide: MRTQNNLTVEVDCHSLGSNECPSMTSSFSPMDSPTPTPTSIYSQGSLASPGWQDAGSYPGHAYERHTGATPMRSAFRLAGMTSNENMGMSYGAMEAQERMPMPDFLSAYDDNVEHFWLPSDGPKTYETGTHSLPYPHTLPQCPPMVRSNYRPHAAYLPEAATNPCLSRSIFHHAERVPQSMSMGNMMPWIPQATESIAPQTIAPSQVGPVTPPPSYSEFPTSIQTFKTHSPTTPLRSCSIGTASGPDTPISRLSGGAADYLEDFQQSPPFRDGLNRLQRQPSRKMIRKQSSRQNMSLENLPSIIKQVQFKCKEPGCKGRFKRQEHLKRHMKSHSKEKPHVCWVPGCERAFSRSDNLNAHYTKTHSKRGGRNRYVATLDESSPDYDPDFRGQLTPDGLPIRGSTLDDPMPNSREYSVDGLDD.

2 C2H2-type zinc fingers span residues 309 to 333 (FKCKEPGCKGRFKRQEHLKRHMKSH) and 339 to 364 (HVCWVPGCERAFSRSDNLNAHYTKTH). Positions 379–421 (ESSPDYDPDFRGQLTPDGLPIRGSTLDDPMPNSREYSVDGLDD) are disordered.

The protein resides in the nucleus. Its function is as follows. BrlA, abaA and wetA are pivotal regulators of conidiophore development and conidium maturation. They act individually and together to regulate their own expression and that of numerous other sporulation-specific genes. Binds promoters of target genes at brlA response elements (BREs) containing the conserved sequence 5'-(C/A)(A/G)AGGG(G/A)-3'. Required for conidiophores formation. Controls expression of abaA. The chain is C2H2 type master regulator of conidiophore development brlA from Aspergillus oryzae (strain ATCC 42149 / RIB 40) (Yellow koji mold).